We begin with the raw amino-acid sequence, 191 residues long: Ion-translocating oxidoreductase complex subunit B (191 aa).

The interval 1-26 (MSSLWIAIAAVSAIALVSGLILGFAA) is hydrophobic. The 4Fe-4S domain maps to 32-90 (EADPIVERIDALLPQSQCGQCGYPGCRPYAEAVANGEKINRCAPGGEAVMRNIAALLAV). 12 residues coordinate [4Fe-4S] cluster: C49, C52, C57, C73, C116, C119, C122, C126, C146, C149, C152, and C156. 2 consecutive 4Fe-4S ferredoxin-type domains span residues 107 to 136 (QVAL…GATR) and 137 to 166 (ALHT…LVPV).

This sequence belongs to the 4Fe4S bacterial-type ferredoxin family. RnfB subfamily. The complex is composed of six subunits: RnfA, RnfB, RnfC, RnfD, RnfE and RnfG. It depends on [4Fe-4S] cluster as a cofactor.

It is found in the cell inner membrane. Its function is as follows. Part of a membrane-bound complex that couples electron transfer with translocation of ions across the membrane. This Edwardsiella ictaluri (strain 93-146) protein is Ion-translocating oxidoreductase complex subunit B.